We begin with the raw amino-acid sequence, 1038 residues long: Isoleucine--tRNA ligase (1038 aa).

The 'HIGH' region motif lies at 47 to 57; the sequence is PFATGLPHYGH. A 'KMSKS' region motif is present at residues 591–595; it reads KMSKR. Lys-594 contacts ATP.

It belongs to the class-I aminoacyl-tRNA synthetase family. IleS type 2 subfamily. As to quaternary structure, monomer. Zn(2+) serves as cofactor.

It is found in the cytoplasm. The enzyme catalyses tRNA(Ile) + L-isoleucine + ATP = L-isoleucyl-tRNA(Ile) + AMP + diphosphate. Functionally, catalyzes the attachment of isoleucine to tRNA(Ile). As IleRS can inadvertently accommodate and process structurally similar amino acids such as valine, to avoid such errors it has two additional distinct tRNA(Ile)-dependent editing activities. One activity is designated as 'pretransfer' editing and involves the hydrolysis of activated Val-AMP. The other activity is designated 'posttransfer' editing and involves deacylation of mischarged Val-tRNA(Ile). This chain is Isoleucine--tRNA ligase, found in Protochlamydia amoebophila (strain UWE25).